Here is a 126-residue protein sequence, read N- to C-terminus: Large ribosomal subunit protein bL19 (126 aa).

Belongs to the bacterial ribosomal protein bL19 family.

Its function is as follows. This protein is located at the 30S-50S ribosomal subunit interface and may play a role in the structure and function of the aminoacyl-tRNA binding site. The polypeptide is Large ribosomal subunit protein bL19 (Thiobacillus denitrificans (strain ATCC 25259 / T1)).